The following is a 509-amino-acid chain: MSTRAGRRVAISAGSLAVLLGALDTYVVVTIMRDIMHDVGIPVNQMQRITWIVTMYLLGYIAAMPLLSRASDRFGRKLLLQVSLAGFAIGSVMTALAGQFGDFHMLIAGRTIQGVASGALLPITLALGADLWAQRNRAGVLGGIGAAQELGSVLGPLYGIFIVWLFSDWRYVFWINIPLTAIAMLMIQVSLSAHDRGDELEKVDVVGGVLLAIALGLVVIGLYNPQPDSKQVLPSYGVPVLVGGIVATVAFAVWERCARTRLIDPAGVHIRPFLSALGASVAAGAALMVTLVNVELFGQGVLGMDQTQAAGLLVWFLIALPIGAVLGGWGATKAGDRTMTFVGLLITAGGYWLISHWPVDLLNYRRSIFGLFSVPTMYADLLVAGLGLGLVIGPLSSATLRVVPTAQHGIASAAVVVARMTGMLIGVAALTAWGLYRFNQILAGLSTAVPPDATLIERAAAVADQAKRAYTMMYSDIFMITAIVCVIGALLGLLISSRKEHASEPKVPE.

Transmembrane regions (helical) follow at residues 48 to 68 (RITW…PLLS), 78 to 98 (LLLQ…ALAG), 112 to 132 (IQGV…ADLW), 146 to 166 (AAQE…VWLF), 171 to 191 (YVFW…QVSL), 203 to 223 (VDVV…IGLY), 232 to 252 (VLPS…VAFA), 272 to 292 (PFLS…VTLV), 309 to 329 (AAGL…LGGW), 339 to 359 (MTFV…HWPV), 381 to 403 (LLVA…LRVV), 410 to 430 (IASA…VAAL), and 477 to 497 (IFMI…LISS).

The protein belongs to the major facilitator superfamily.

It localises to the cell inner membrane. In association with lipoprotein LprG probably transports triacylglycerides (TAG) across the inner cell membrane into the periplasm; TAG probably regulates lipid metabolism and growth regulation. May be an efflux transporter and involved in maintaining correct cell wall permeability. Probably required with LprG for normal surface localization of lipoarabinomannan (LAM). The polypeptide is Probable triacylglyceride transporter ML0556 (Mycobacterium leprae (strain TN)).